The following is a 211-amino-acid chain: Adenylyl-sulfate kinase (211 aa).

32–39 (GLSASGKS) is a binding site for ATP. The Phosphoserine intermediate role is filled by Ser107.

This sequence belongs to the APS kinase family. As to quaternary structure, homodimer.

The enzyme catalyses adenosine 5'-phosphosulfate + ATP = 3'-phosphoadenylyl sulfate + ADP + H(+). It functions in the pathway sulfur metabolism; hydrogen sulfide biosynthesis; sulfite from sulfate: step 2/3. Catalyzes the synthesis of activated sulfate. The chain is Adenylyl-sulfate kinase from Penicillium chrysogenum (Penicillium notatum).